We begin with the raw amino-acid sequence, 218 residues long: Thiopurine S-methyltransferase (218 aa).

W10, L45, E66, and R123 together coordinate S-adenosyl-L-methionine.

Belongs to the class I-like SAM-binding methyltransferase superfamily. TPMT family.

The protein resides in the cytoplasm. It carries out the reaction S-adenosyl-L-methionine + a thiopurine = S-adenosyl-L-homocysteine + a thiopurine S-methylether.. Involved in the biological cycling of tellurium and selenium. Tellurium resistance (Ter) mechanism. The chain is Thiopurine S-methyltransferase from Pseudomonas syringae pv. pisi.